The sequence spans 316 residues: Beta-ketoacyl-[acyl-carrier-protein] synthase III 1 (316 aa).

Active-site residues include cysteine 112 and histidine 243. The interval 244–248 is ACP-binding; sequence QANYR. Asparagine 273 is an active-site residue.

This sequence belongs to the thiolase-like superfamily. FabH family. As to quaternary structure, homodimer.

It is found in the cytoplasm. It catalyses the reaction malonyl-[ACP] + acetyl-CoA + H(+) = 3-oxobutanoyl-[ACP] + CO2 + CoA. The protein operates within lipid metabolism; fatty acid biosynthesis. Catalyzes the condensation reaction of fatty acid synthesis by the addition to an acyl acceptor of two carbons from malonyl-ACP. Catalyzes the first condensation reaction which initiates fatty acid synthesis and may therefore play a role in governing the total rate of fatty acid production. Possesses both acetoacetyl-ACP synthase and acetyl transacylase activities. Its substrate specificity determines the biosynthesis of branched-chain and/or straight-chain of fatty acids. The sequence is that of Beta-ketoacyl-[acyl-carrier-protein] synthase III 1 from Vibrio vulnificus (strain CMCP6).